Here is a 93-residue protein sequence, read N- to C-terminus: Cell division protein CrgA (93 aa).

2 consecutive transmembrane segments (helical) span residues 31 to 51 (VWFV…LMVF) and 70 to 90 (LGPW…LLTM).

Belongs to the CrgA family.

Its subcellular location is the cell membrane. Involved in cell division. This is Cell division protein CrgA from Mycobacterium leprae (strain Br4923).